The sequence spans 315 residues: Cysteine proteinase 1 (315 aa).

The N-terminal stretch at 1 to 13 (MFTFILMFYIGYG) is a signal peptide. A propeptide spans 14-93 (IDFNTWVANN…KGEVRYLNIQ (80 aa)) (activation peptide). Disulfide bonds link cysteine 115–cysteine 161 and cysteine 152–cysteine 193. Cysteine 118 is a catalytic residue. Residues histidine 259 and asparagine 279 contribute to the active site.

Belongs to the peptidase C1 family.

It is found in the lysosome. With respect to regulation, inhibited by cysteine protease inhibitors ICP1 and ICP2. Functionally, cysteine protease which degrades matrix proteins such as collagen, laminin and fibronectin and thus is involved in the destruction of human tissue. Can abolish adhesion. May play an important role in pathogenicity. The chain is Cysteine proteinase 1 from Entamoeba histolytica (strain ATCC 30459 / HM-1:IMSS / ABRM).